Consider the following 355-residue polypeptide: Undecaprenyl-phosphate alpha-N-acetylglucosaminyl 1-phosphate transferase (355 aa).

A run of 8 helical transmembrane segments spans residues 1–21 (MLSIFVTFLGAFLTLIVMRPL), 39–59 (GTIPLIGGASLFVGNLCYYLM), 63–83 (QLRLPYLYLFSIFVLLAIGIL), 123–143 (FQLTLGSIGLIITVFATIAII), 182–202 (WSFALIVSILPYLMLNLGIPF), 208–228 (VFMGDAGSTLIGFTIIWILLL), 237–257 (MNPVTALWIIAIPLIDMVAII), and 315–335 (WAMFVGFFILFFLYVYSITHA).

It belongs to the glycosyltransferase 4 family. WecA subfamily. It depends on Mg(2+) as a cofactor. Mn(2+) serves as cofactor.

Its subcellular location is the cell inner membrane. It carries out the reaction di-trans,octa-cis-undecaprenyl phosphate + UDP-N-acetyl-alpha-D-glucosamine = N-acetyl-alpha-D-glucosaminyl-di-trans,octa-cis-undecaprenyl diphosphate + UMP. It functions in the pathway bacterial outer membrane biogenesis; LPS O-antigen biosynthesis. Catalyzes the transfer of the GlcNAc-1-phosphate moiety from UDP-GlcNAc onto the carrier lipid undecaprenyl phosphate (C55-P), yielding GlcNAc-pyrophosphoryl-undecaprenyl (GlcNAc-PP-C55). This is Undecaprenyl-phosphate alpha-N-acetylglucosaminyl 1-phosphate transferase from Haemophilus influenzae (strain ATCC 51907 / DSM 11121 / KW20 / Rd).